A 359-amino-acid chain; its full sequence is Type-1 angiotensin II receptor (359 aa).

Residues Met-1 to Ser-25 are Extracellular-facing. N-linked (GlcNAc...) asparagine glycosylation occurs at Asn-4. Asp-17 serves as a coordination point for angiotensin II. 2 disulfide bridges follow: Cys-18/Cys-274 and Cys-101/Cys-180. Residues Tyr-26 to Cys-55 form a helical membrane-spanning segment. Over Tyr-56 to Thr-61 the chain is Cytoplasmic. Residues Val-62–Ala-89 traverse the membrane as a helical segment. Topologically, residues Met-90–Asn-98 are extracellular. A helical membrane pass occupies residues Cys-99–Asp-125. Residues Arg-126–Thr-141 are Cytoplasmic-facing. Residues Met-142–Ile-165 traverse the membrane as a helical segment. Residues His-166–Thr-190 lie on the Extracellular side of the membrane. Residue Arg-167 participates in angiotensin II binding. N-linked (GlcNAc...) asparagine glycosylation occurs at Asn-176. Positions 182 and 184 each coordinate angiotensin II. Residues Asn-187 and Asn-188 are each glycosylated (N-linked (GlcNAc...) asparagine). A helical membrane pass occupies residues Leu-191–Thr-216. Angiotensin II is bound at residue Lys-199. At Leu-217–Phe-239 the chain is on the cytoplasmic side. The helical transmembrane segment at Lys-240–Leu-268 threads the bilayer. The Extracellular segment spans residues His-269–Asp-278. A helical transmembrane segment spans residues Ile-279–Phe-304. Over Phe-305 to Glu-359 the chain is Cytoplasmic.

The protein belongs to the G-protein coupled receptor 1 family. In terms of processing, C-terminal Ser or Thr residues may be phosphorylated.

Its subcellular location is the cell membrane. In terms of biological role, receptor for angiotensin II, a vasoconstricting peptide, which acts as a key regulator of blood pressure and sodium retention by the kidney. The activated receptor in turn couples to G-alpha proteins G(q) (GNAQ, GNA11, GNA14 or GNA15) and thus activates phospholipase C and increases the cytosolic Ca(2+) concentrations, which in turn triggers cellular responses such as stimulation of protein kinase C. The sequence is that of Type-1 angiotensin II receptor (AGTR1) from Gallus gallus (Chicken).